An 84-amino-acid polypeptide reads, in one-letter code: MSDIIFLNGMRFYGYHGALHAENELGQIFIVDVTLKVDLTEAGKTDNVKDTVHYGEVFEDVKNIVEGPSCQLIEHLAERIAKRI.

Residues E22, Y54, and 73 to 74 (IE) each bind substrate.

The protein belongs to the DHNA family.

It catalyses the reaction 7,8-dihydroneopterin = 6-hydroxymethyl-7,8-dihydropterin + glycolaldehyde. The catalysed reaction is 7,8-dihydroneopterin = 7,8-dihydromonapterin. The protein operates within cofactor biosynthesis; tetrahydrofolate biosynthesis; 2-amino-4-hydroxy-6-hydroxymethyl-7,8-dihydropteridine diphosphate from 7,8-dihydroneopterin triphosphate: step 3/4. Functionally, catalyzes the conversion of 7,8-dihydroneopterin to 6-hydroxymethyl-7,8-dihydropterin. Can also catalyze the epimerization of carbon 2' of dihydroneopterin to dihydromonapterin. The chain is Dihydroneopterin aldolase (folB) from Staphylococcus haemolyticus.